Here is a 327-residue protein sequence, read N- to C-terminus: dTDP-4-dehydrorhamnose reductase (327 aa).

The interval 1–22 (MDLINGMGTSPGYWRTPREPGN) is disordered. Residues 43-45 (GMV), 69-70 (DI), and 91-93 (AYT) each bind NADH. NADPH contacts are provided by residues 44-45 (MV), 69-70 (DI), and 91-93 (AYT). 132-133 (TD) lines the dTDP-beta-L-rhamnose pocket. NADH-binding residues include Y157 and K161. Positions 157 and 161 each coordinate NADPH. The active-site Proton donor/acceptor is the Y157. W182 contributes to the dTDP-beta-L-rhamnose binding site. A compositionally biased stretch (basic and acidic residues) spans 264–276 (PERVRPCGSDRHP). The interval 264–292 (PERVRPCGSDRHPRPAPRPSYTVLSSQRS) is disordered.

It belongs to the dTDP-4-dehydrorhamnose reductase family. It depends on Mg(2+) as a cofactor.

It catalyses the reaction dTDP-beta-L-rhamnose + NADP(+) = dTDP-4-dehydro-beta-L-rhamnose + NADPH + H(+). Its pathway is carbohydrate biosynthesis; dTDP-L-rhamnose biosynthesis. In terms of biological role, involved in the biosynthesis of the dTDP-L-rhamnose which is a component of the critical linker, D-N-acetylglucosamine-L-rhamnose disaccharide, which connects the galactan region of arabinogalactan to peptidoglycan via a phosphodiester linkage. Catalyzes the reduction of dTDP-6-deoxy-L-lyxo-4-hexulose to yield dTDP-L-rhamnose. This Mycolicibacterium smegmatis (strain ATCC 700084 / mc(2)155) (Mycobacterium smegmatis) protein is dTDP-4-dehydrorhamnose reductase.